The following is a 137-amino-acid chain: Protein LTO1 homolog (137 aa).

Ala2 is subject to N-acetylalanine. A deca-GX3 motif; required for interaction with YAE1 and the CIA complex region spans residues 22–58 (GYQEGYEEGSSLGIVEGKRYGMVHGAKIGSEIGCYRG).

Belongs to the LTO1 family. As to quaternary structure, forms a complex with YAE1. Interacts with PYCR1 and PYCR2.

The protein resides in the nucleus. Functionally, the complex LTO1:YAE1 functions as a target specific adapter that probably recruits apo-ABCE1 to the cytosolic iron-sulfur protein assembly (CIA) complex machinery. May be required for biogenesis of the large ribosomal subunit and initiation of translation. May play a role in the regulation of proline metabolism and ROS production. In Mus musculus (Mouse), this protein is Protein LTO1 homolog.